Reading from the N-terminus, the 169-residue chain is MERAIFAGGCFWCMVQPFEEQAGILSVRSGYTGGHVPNPSYEQVCSKTTGHTEAVEIIFDPSLISYSDLVELYWAQTDPTDAFGQFEDRGDNYRPVIYYTDERQREIAERSKQSLQASGRFDQPIVTSIEPAEPFYLAEDYHQGFYQKNPQRYAQSSAIRHQFLEEHWQ.

Residue Cys-10 is part of the active site.

This sequence belongs to the MsrA Met sulfoxide reductase family.

The catalysed reaction is L-methionyl-[protein] + [thioredoxin]-disulfide + H2O = L-methionyl-(S)-S-oxide-[protein] + [thioredoxin]-dithiol. It catalyses the reaction [thioredoxin]-disulfide + L-methionine + H2O = L-methionine (S)-S-oxide + [thioredoxin]-dithiol. Has an important function as a repair enzyme for proteins that have been inactivated by oxidation. Catalyzes the reversible oxidation-reduction of methionine sulfoxide in proteins to methionine. In Streptococcus equi subsp. zooepidemicus (strain MGCS10565), this protein is Peptide methionine sulfoxide reductase MsrA.